Consider the following 419-residue polypeptide: MSFRSSSSYSLQSKGISGGGGYGAGFGGGSGAGFGGGSGAGFGGGYGAGFGGGASSGFSLSSAGGFGAAAASSSFSNFGGNDKQTMQNLNDRLASYLEKVRALEAANADLELKIREWYEKQKGSGIGAGSKDFSKYFEIISDLRNKILSATIDNSRVVLQIDNAKLAADDFRLKFENELALRQSVETDINGLRRVLDELTLARGDLEMQIESLTEELAYLKKNHEEEMSIAKSSSAGQVNVEMDAAPGIDLNKILSDMRADYETLAEKNRRDAELWFNQKSGELKKEIQTGVEQVQTSKSEINDLRRSLQSLEIELQSQLAMKKSLEDTLAETDGRYGAQLQTIQFSLRSLEEQLLQIRSDMERQNMEYRQLLDIKTRLEMEIETYRRLLEGEFGSLKSSIVQATEVSTSQSSSSSKKD.

Residues 1-81 form a head region; it reads MSFRSSSSYS…SSSFSNFGGN (81 aa). The coil 1A stretch occupies residues 82 to 117; that stretch reads DKQTMQNLNDRLASYLEKVRALEAANADLELKIREW. In terms of domain architecture, IF rod spans 82–397; it reads DKQTMQNLND…RLLEGEFGSL (316 aa). The interval 118–139 is linker 1; sequence YEKQKGSGIGAGSKDFSKYFEI. Residues 140–231 are coil 1B; it reads ISDLRNKILS…KNHEEEMSIA (92 aa). Residues 232–254 are linker 12; sequence KSSSAGQVNVEMDAAPGIDLNKI. The coil 2 stretch occupies residues 255 to 393; the sequence is LSDMRADYET…ETYRRLLEGE (139 aa). A tail region spans residues 394–419; the sequence is FGSLKSSIVQATEVSTSQSSSSSKKD.

The protein belongs to the intermediate filament family. Heterotetramer of two type I and two type II keratins.

The chain is Keratin, type I cytoskeletal 47 kDa (xk81b2) from Xenopus laevis (African clawed frog).